A 387-amino-acid chain; its full sequence is Alpha-sarcoglycan (387 aa).

Residues 1–23 (MAATLTWILLFVGLLAGLRDTKA) form the signal peptide. The Extracellular portion of the chain corresponds to 24 to 290 (QQTTLYPLVG…ATGRDFLADA (267 aa)). N-linked (GlcNAc...) asparagine glycans are attached at residues N174 and N246. A helical transmembrane segment spans residues 291–311 (LVTLLVPLLVALLLTLLLAYI). Residues 312 to 387 (MCCRREGQLK…AQVPLILDQH (76 aa)) lie on the Cytoplasmic side of the membrane. At S377 the chain carries Phosphoserine.

This sequence belongs to the sarcoglycan alpha/epsilon family. As to quaternary structure, interacts with the syntrophin SNTA1. Cross-link to form 2 major subcomplexes: one consisting of SGCB, SGCD and SGCG and the other consisting of SGCB and SGCD. The association between SGCB and SGCG is particularly strong while SGCA is loosely associated with the other sarcoglycans. As to expression, strongly expressed in skeletal and heart muscle.

Its subcellular location is the cell membrane. The protein localises to the sarcolemma. The protein resides in the cytoplasm. It localises to the cytoskeleton. Functionally, component of the sarcoglycan complex, a subcomplex of the dystrophin-glycoprotein complex which forms a link between the F-actin cytoskeleton and the extracellular matrix. The chain is Alpha-sarcoglycan (SGCA) from Mesocricetus auratus (Golden hamster).